An 834-amino-acid polypeptide reads, in one-letter code: Glycerol-3-phosphate acyltransferase (834 aa).

An HXXXXD motif motif is present at residues cysteine 309–isoleucine 314.

It belongs to the GPAT/DAPAT family.

The protein resides in the cell inner membrane. The enzyme catalyses sn-glycerol 3-phosphate + an acyl-CoA = a 1-acyl-sn-glycero-3-phosphate + CoA. Its pathway is phospholipid metabolism; CDP-diacylglycerol biosynthesis; CDP-diacylglycerol from sn-glycerol 3-phosphate: step 1/3. This is Glycerol-3-phosphate acyltransferase from Pseudomonas aeruginosa (strain LESB58).